Here is a 96-residue protein sequence, read N- to C-terminus: Integration host factor subunit beta (96 aa).

The interval 59–78 is disordered; the sequence is RVGRNPKTGETVSLPGKYVP.

Belongs to the bacterial histone-like protein family. Heterodimer of an alpha and a beta chain.

This protein is one of the two subunits of integration host factor, a specific DNA-binding protein that functions in genetic recombination as well as in transcriptional and translational control. In Thioalkalivibrio sulfidiphilus (strain HL-EbGR7), this protein is Integration host factor subunit beta.